The chain runs to 581 residues: Netrin-3 (581 aa).

Residues 1–15 (LRLLLTTSVLRLARA) form the signal peptide. A Laminin N-terminal domain is found at 35-261 (APRRCIPEFV…SVGELQVGGR (227 aa)). 2 N-linked (GlcNAc...) asparagine glycosylation sites follow: asparagine 88 and asparagine 103. Intrachain disulfides connect cysteine 91–cysteine 124, cysteine 262–cysteine 271, cysteine 264–cysteine 281, cysteine 283–cysteine 292, cysteine 295–cysteine 315, cysteine 318–cysteine 327, cysteine 320–cysteine 345, cysteine 348–cysteine 357, cysteine 360–cysteine 378, cysteine 381–cysteine 393, cysteine 383–cysteine 400, cysteine 402–cysteine 411, cysteine 414–cysteine 428, cysteine 449–cysteine 521, and cysteine 468–cysteine 578. Laminin EGF-like domains follow at residues 262–317 (CKCN…ECLA), 318–380 (CNCN…ACKA), and 381–430 (CDCH…PCIK). A glycan (N-linked (GlcNAc...) asparagine) is linked at asparagine 394. Residues 449–578 (CDSYCKPAKG…LQRREKKGKC (130 aa)) enclose the NTR domain. The short motif at 507–509 (RGD) is the Cell attachment site element. Asparagine 540 is a glycosylation site (N-linked (GlcNAc...) asparagine).

Its subcellular location is the secreted. The protein localises to the extracellular space. It is found in the extracellular matrix. In terms of biological role, netrins control guidance of CNS commissural axons and peripheral motor axons. In Gallus gallus (Chicken), this protein is Netrin-3 (NTN3).